The following is a 147-amino-acid chain: 16 kDa heat shock protein B (147 aa).

Positions 29–141 (NEAGSTYPPY…APSAFRSAAA (113 aa)) constitute a sHSP domain.

It belongs to the small heat shock protein (HSP20) family.

The polypeptide is 16 kDa heat shock protein B (ibpB) (Azotobacter vinelandii).